The primary structure comprises 111 residues: Prothymosin alpha-A (111 aa).

Residues 1–111 form a disordered region; it reads MSDTAVDASV…IKKQKTDEDD (111 aa). A compositionally biased stretch (basic and acidic residues) spans 9-42; sequence SVEKTTKDLKAKEKEVVEEAENGKDKPTNGKAEN. Acidic residues-rich tracts occupy residues 43–81 and 90–100; these read EENG…DEVE and EDDEDDDDDDV. Positions 101 to 111 are enriched in basic and acidic residues; it reads EIKKQKTDEDD.

It belongs to the pro/parathymosin family.

It is found in the nucleus. The polypeptide is Prothymosin alpha-A (ptma-a) (Xenopus laevis (African clawed frog)).